A 669-amino-acid polypeptide reads, in one-letter code: Trifunctional UDP-glucose 4,6-dehydratase/UDP-4-keto-6-deoxy-D-glucose 3,5-epimerase/UDP-4-keto-L-rhamnose-reductase RHM1 (669 aa).

Position 13 to 19 (13 to 19) interacts with NAD(+); sequence GAAGFIA. Thr-132 is a binding site for substrate. The active-site Proton donor is Asp-133. Active-site proton acceptor residues include Glu-134 and Tyr-159. 391 to 397 contacts NADP(+); sequence GKTGWIG.

In the N-terminal section; belongs to the NAD(P)-dependent epimerase/dehydratase family. dTDP-glucose dehydratase subfamily. It in the C-terminal section; belongs to the dTDP-4-dehydrorhamnose reductase family. Requires NAD(+) as cofactor. It depends on NADP(+) as a cofactor. In terms of tissue distribution, expressed in roots, stems, leaves, seedlings, inflorescence tips, and siliques. Detected in the adaxial side of cotyledons, in the emerging leaves and in trichomes. Also detected in the root tip, more precisely in the epidermal cells in the meristematic and elongation zone.

Its subcellular location is the cytoplasm. The protein localises to the cytosol. It carries out the reaction UDP-alpha-D-glucose = UDP-4-dehydro-6-deoxy-alpha-D-glucose + H2O. It functions in the pathway carbohydrate biosynthesis. Functionally, trifunctional enzyme involved in UDP-beta-L-rhamnose biosynthesis, a precursor of the primary cell wall components rhamnogalacturonan I (RG-I) and rhamnogalacturonan II (RG-II). Plays a major role in supplying UDP-rhamnose for flavonol biosynthesis. Catalyzes the dehydration of UDP-glucose to form UDP-4-dehydro-6-deoxy-D-glucose followed by the epimerization of the C3' and C5' positions of UDP-4-dehydro-6-deoxy-D-glucose to form UDP-4-keto-beta-L-rhamnose and the reduction of UDP-4-keto-beta-L-rhamnose to yield UDP-beta-L-rhamnose. The polypeptide is Trifunctional UDP-glucose 4,6-dehydratase/UDP-4-keto-6-deoxy-D-glucose 3,5-epimerase/UDP-4-keto-L-rhamnose-reductase RHM1 (Arabidopsis thaliana (Mouse-ear cress)).